A 106-amino-acid polypeptide reads, in one-letter code: Large ribosomal subunit protein uL24 (106 aa).

It belongs to the universal ribosomal protein uL24 family. Part of the 50S ribosomal subunit.

Its function is as follows. One of two assembly initiator proteins, it binds directly to the 5'-end of the 23S rRNA, where it nucleates assembly of the 50S subunit. Functionally, one of the proteins that surrounds the polypeptide exit tunnel on the outside of the subunit. This Erythrobacter litoralis (strain HTCC2594) protein is Large ribosomal subunit protein uL24.